A 186-amino-acid chain; its full sequence is MSKNDHRITHNKSDKDNLDDDFSLFRDEVKGVKKLRQDTILHAPNRNPKQKEIRRTEREASDNDFYFSDEFMPHLTDEGPTRYARSDVSKYEVKRLRRGVYVPDVFLDMHGMTQQEAKRELGAMIAYCLKENVHCACVQHGIGKHILKQNVPLWLAQHPDVLAFHQAPLEFGGDGALLVLLSIPEK.

Basic and acidic residues-rich tracts occupy residues 1–16 (MSKN…SDKD) and 49–60 (KQKEIRRTEREA). Disordered regions lie at residues 1 to 20 (MSKN…NLDD) and 41 to 60 (LHAP…EREA). The region spanning 107–182 (LDMHGMTQQE…GDGALLVLLS (76 aa)) is the Smr domain.

It belongs to the SmrB family. In terms of assembly, associates with collided ribosomes, but not with correctly translating polysomes.

Acts as a ribosome collision sensor. Detects stalled/collided disomes (pairs of ribosomes where the leading ribosome is stalled and a second ribosome has collided with it) and endonucleolytically cleaves mRNA at the 5' boundary of the stalled ribosome. Stalled/collided disomes form a new interface (primarily via the 30S subunits) that binds SmrB. Cleaved mRNA becomes available for tmRNA ligation, leading to ribosomal subunit dissociation and rescue of stalled ribosomes. The chain is Ribosome rescue factor SmrB from Vibrio cholerae serotype O1 (strain ATCC 39541 / Classical Ogawa 395 / O395).